The chain runs to 85 residues: Small muscular protein (85 aa).

The interval 19–63 (PMGAFRPGAGQPPRRKESTPGTAEGAPATPEEKKPVPGMKKFPGP) is disordered. Ser-36 is subject to Phosphoserine. Thr-47 is subject to Phosphothreonine.

It belongs to the SMPX family.

Functionally, plays a role in the regulatory network through which muscle cells coordinate their structural and functional states during growth, adaptation, and repair. The polypeptide is Small muscular protein (Smpx) (Rattus norvegicus (Rat)).